The sequence spans 518 residues: Delta(14)-sterol reductase erg24B (518 aa).

An N-linked (GlcNAc...) asparagine glycan is attached at N36. A run of 6 helical transmembrane segments spans residues 110-130 (VTMW…FLPG), 150-170 (AFLS…LYGT), 182-202 (YVQV…FVYL), 294-314 (IVLT…MEPA), 321-341 (VIMD…VPFL), and 355-375 (ELGL…YVIF). NADP(+)-binding positions include K382, R386, L409, W414, and 421 to 422 (NY). Residues 464-484 (SRGWGMIFTYFYMIYFGVLLL) form a helical membrane-spanning segment. NADP(+)-binding positions include D490, 494-498 (CKRKY), and Y505.

The protein belongs to the ERG4/ERG24 family.

Its subcellular location is the endoplasmic reticulum membrane. It participates in steroid metabolism; ergosterol biosynthesis. Its function is as follows. Delta(14)-sterol reductase; part of the third module of ergosterol biosynthesis pathway that includes the late steps of the pathway. Catalyzes the reduction of the C14=C15 double bond within 4,4,24-trimethyl ergosta-8,14,24(28)-trienolto produce 4,4-dimethylfecosterol. The third module or late pathway involves the ergosterol synthesis itself through consecutive reactions that mainly occur in the endoplasmic reticulum (ER) membrane. Firstly, the squalene synthase erg9 catalyzes the condensation of 2 farnesyl pyrophosphate moieties to form squalene, which is the precursor of all steroids. Squalene synthase is crucial for balancing the incorporation of farnesyl diphosphate (FPP) into sterol and nonsterol isoprene synthesis. Secondly, squalene is converted into lanosterol by the consecutive action of the squalene epoxidase erg1 and the lanosterol synthase erg7. Then, the delta(24)-sterol C-methyltransferase erg6 methylates lanosterol at C-24 to produce eburicol. Eburicol is the substrate of the sterol 14-alpha demethylase encoded by cyp51A and cyp51B, to yield 4,4,24-trimethyl ergosta-8,14,24(28)-trienol. The C-14 reductase erg24 then reduces the C14=C15 double bond which leads to 4,4-dimethylfecosterol. A sequence of further demethylations at C-4, involving the C-4 demethylation complex containing the C-4 methylsterol oxidases erg25A or erg25B, the sterol-4-alpha-carboxylate 3-dehydrogenase erg26 and the 3-keto-steroid reductase erg27, leads to the production of fecosterol via 4-methylfecosterol. The C-8 sterol isomerase erg2 then catalyzes the reaction which results in unsaturation at C-7 in the B ring of sterols and thus converts fecosterol to episterol. The sterol-C5-desaturase erg3B then catalyzes the introduction of a C-5 double bond in the B ring to produce 5-dehydroepisterol. The 2 other sterol-C5-desaturases, erg3A and erg3C, seem to be less important in ergosterol biosynthesis. The C-22 sterol desaturase erg5 further converts 5-dehydroepisterol into ergosta-5,7,22,24(28)-tetraen-3beta-ol by forming the C-22(23) double bond in the sterol side chain. Finally, ergosta-5,7,22,24(28)-tetraen-3beta-ol is substrate of the C-24(28) sterol reductases erg4A and erg4B to produce ergosterol. Possible alternative sterol biosynthetic pathways might exist from fecosterol to ergosterol, depending on the activities of the erg3 isoforms. The polypeptide is Delta(14)-sterol reductase erg24B (Aspergillus fumigatus (strain ATCC MYA-4609 / CBS 101355 / FGSC A1100 / Af293) (Neosartorya fumigata)).